A 299-amino-acid chain; its full sequence is Protoheme IX farnesyltransferase (299 aa).

A run of 9 helical transmembrane segments spans residues 27 to 47, 53 to 73, 97 to 117, 121 to 141, 149 to 169, 175 to 195, 222 to 242, 244 to 264, and 273 to 293; these read VVALMLLTSVVGMSLAPHEHF, LIALVGIALMAGSAAAFNHLI, FNVLLFALLIGSLGFLSLMLW, LTAYLTFASLLGYAAVYTLYL, IVIAGIAGAMPPLLGWTSITG, AWVLVMIIFIWTPPHFWALAI, ILLYAILLALVCMLPVLVGMA, YLYLFSALVLNVCFVRYAIKL, and AIEMFRFSIYFLLLLFCALLL.

The protein belongs to the UbiA prenyltransferase family. Protoheme IX farnesyltransferase subfamily.

The protein localises to the cell inner membrane. The catalysed reaction is heme b + (2E,6E)-farnesyl diphosphate + H2O = Fe(II)-heme o + diphosphate. Its pathway is porphyrin-containing compound metabolism; heme O biosynthesis; heme O from protoheme: step 1/1. Converts heme B (protoheme IX) to heme O by substitution of the vinyl group on carbon 2 of heme B porphyrin ring with a hydroxyethyl farnesyl side group. This chain is Protoheme IX farnesyltransferase, found in Vibrio vulnificus (strain CMCP6).